Consider the following 122-residue polypeptide: Small ribosomal subunit protein uS13 (122 aa).

Positions 98 to 122 (VRGQRTHTNARTRKGPAKAIAGKKK) are disordered.

It belongs to the universal ribosomal protein uS13 family. As to quaternary structure, part of the 30S ribosomal subunit. Forms a loose heterodimer with protein S19. Forms two bridges to the 50S subunit in the 70S ribosome.

Its function is as follows. Located at the top of the head of the 30S subunit, it contacts several helices of the 16S rRNA. In the 70S ribosome it contacts the 23S rRNA (bridge B1a) and protein L5 of the 50S subunit (bridge B1b), connecting the 2 subunits; these bridges are implicated in subunit movement. Contacts the tRNAs in the A and P-sites. The protein is Small ribosomal subunit protein uS13 of Jannaschia sp. (strain CCS1).